A 380-amino-acid polypeptide reads, in one-letter code: Queuine tRNA-ribosyltransferase (380 aa).

The Proton acceptor role is filled by Asp89. Substrate is bound by residues 89-93 (DSGGF), Asp143, Gln187, and Gly214. Residues 245–251 (GVGKPED) are RNA binding. Catalysis depends on Asp264, which acts as the Nucleophile. Residues 269–273 (TRNAR) form an RNA binding; important for wobble base 34 recognition region. 4 residues coordinate Zn(2+): Cys302, Cys304, Cys307, and His333.

The protein belongs to the queuine tRNA-ribosyltransferase family. Homodimer. Within each dimer, one monomer is responsible for RNA recognition and catalysis, while the other monomer binds to the replacement base PreQ1. The cofactor is Zn(2+).

The enzyme catalyses 7-aminomethyl-7-carbaguanine + guanosine(34) in tRNA = 7-aminomethyl-7-carbaguanosine(34) in tRNA + guanine. It participates in tRNA modification; tRNA-queuosine biosynthesis. Functionally, catalyzes the base-exchange of a guanine (G) residue with the queuine precursor 7-aminomethyl-7-deazaguanine (PreQ1) at position 34 (anticodon wobble position) in tRNAs with GU(N) anticodons (tRNA-Asp, -Asn, -His and -Tyr). Catalysis occurs through a double-displacement mechanism. The nucleophile active site attacks the C1' of nucleotide 34 to detach the guanine base from the RNA, forming a covalent enzyme-RNA intermediate. The proton acceptor active site deprotonates the incoming PreQ1, allowing a nucleophilic attack on the C1' of the ribose to form the product. After dissociation, two additional enzymatic reactions on the tRNA convert PreQ1 to queuine (Q), resulting in the hypermodified nucleoside queuosine (7-(((4,5-cis-dihydroxy-2-cyclopenten-1-yl)amino)methyl)-7-deazaguanosine). In Proteus mirabilis (strain HI4320), this protein is Queuine tRNA-ribosyltransferase.